The following is a 430-amino-acid chain: Adenylosuccinate synthetase (430 aa).

Residues 12 to 18 (GDEGKGK) and 40 to 42 (GHT) contribute to the GTP site. Catalysis depends on D13, which acts as the Proton acceptor. 2 residues coordinate Mg(2+): D13 and G40. IMP contacts are provided by residues 13 to 16 (DEGK), 38 to 41 (NAGH), T128, R142, Q223, T238, and R302. H41 acts as the Proton donor in catalysis. Position 298 to 304 (298 to 304 (TTTGRPR)) interacts with substrate. GTP-binding positions include R304, 330–332 (LLD), and 412–414 (SVG).

Belongs to the adenylosuccinate synthetase family. In terms of assembly, homodimer. The cofactor is Mg(2+).

Its subcellular location is the cytoplasm. The catalysed reaction is IMP + L-aspartate + GTP = N(6)-(1,2-dicarboxyethyl)-AMP + GDP + phosphate + 2 H(+). The protein operates within purine metabolism; AMP biosynthesis via de novo pathway; AMP from IMP: step 1/2. Plays an important role in the de novo pathway of purine nucleotide biosynthesis. Catalyzes the first committed step in the biosynthesis of AMP from IMP. In Listeria welshimeri serovar 6b (strain ATCC 35897 / DSM 20650 / CCUG 15529 / CIP 8149 / NCTC 11857 / SLCC 5334 / V8), this protein is Adenylosuccinate synthetase.